Here is a 413-residue protein sequence, read N- to C-terminus: Azaphilone biosynthesis cluster protein M (413 aa).

The span at 123 to 138 shows a compositional bias: polar residues; the sequence is STQPDQVQPNQPTPSF. Residues 123-145 are disordered; sequence STQPDQVQPNQPTPSFESAAGAS.

Its pathway is secondary metabolite biosynthesis. Part of the gene cluster that mediates the biosynthesis of azaterrilone A and other azaphilones, a class of fungal metabolites characterized by a highly oxygenated pyrano-quinone bicyclic core and exhibiting a broad range of bioactivities. The first step of the pathway begins with the non-reducing polyketide synthase tazA that assembles one acetyl-CoA starter unit, five malonyl-CoA units, and catalyzes a series of Claisen condensations, methylation, PT-mediated cyclization, and finally releases the first hexaketide precursor through the R-domain. The tazA product then undergoes reduction on its terminal ketone and the following pyran-ring formation by yet undetermined enzyme(s). Dehydration and enoyl reduction, possibly involving the trans-enoyl reductase tazE leads to the next intermediate. TazD is predicted as an acetyltransferase and might catalyze the acetylation steps leading to the synthesis of azaterrilone A. Azaterrilone A is not the final product of the taz pathway and both the highly reducing polyketide synthase tazB and the dual enzyme tazHJ catalyze late steps of the pathway, leading to the production of the 2 final stereoisomers that contain additional polyketide modification whose structures have still to be determined. The chain is Azaphilone biosynthesis cluster protein M from Aspergillus terreus (strain NIH 2624 / FGSC A1156).